The following is a 273-amino-acid chain: Outer surface protein A (273 aa).

An N-terminal signal peptide occupies residues 1-16; sequence MKKYLLGIGLILALIA. Cys-17 is lipidated: N-palmitoyl cysteine. Cys-17 carries the S-diacylglycerol cysteine lipid modification.

The protein belongs to the OspA lipoprotein family.

It localises to the cell outer membrane. The protein localises to the cell surface. This Borreliella burgdorferi (Lyme disease spirochete) protein is Outer surface protein A.